A 130-amino-acid polypeptide reads, in one-letter code: Small ribosomal subunit protein uS9 (130 aa).

The protein belongs to the universal ribosomal protein uS9 family.

This chain is Small ribosomal subunit protein uS9, found in Pseudomonas fluorescens (strain Pf0-1).